Consider the following 167-residue polypeptide: MNNKHPKNKAKSTTTPKTIALNKRARHEYHLIERHEAGLELQGWEVKAIRAGRANLGDGYAYVRDGEIFLIGAQITPLIQASTHVVANDRRTRKLLLHRRQIDTLIGRVQREGFTLVPTAMYWSKNRVKMEIALAKGKQAHDKRHAEKEREWQRDKQRIMRAHNRNA.

Residues 139 to 167 (QAHDKRHAEKEREWQRDKQRIMRAHNRNA) form a disordered region. Residues 144–158 (RHAEKEREWQRDKQR) are compositionally biased toward basic and acidic residues.

It belongs to the SmpB family.

Its subcellular location is the cytoplasm. In terms of biological role, required for rescue of stalled ribosomes mediated by trans-translation. Binds to transfer-messenger RNA (tmRNA), required for stable association of tmRNA with ribosomes. tmRNA and SmpB together mimic tRNA shape, replacing the anticodon stem-loop with SmpB. tmRNA is encoded by the ssrA gene; the 2 termini fold to resemble tRNA(Ala) and it encodes a 'tag peptide', a short internal open reading frame. During trans-translation Ala-aminoacylated tmRNA acts like a tRNA, entering the A-site of stalled ribosomes, displacing the stalled mRNA. The ribosome then switches to translate the ORF on the tmRNA; the nascent peptide is terminated with the 'tag peptide' encoded by the tmRNA and targeted for degradation. The ribosome is freed to recommence translation, which seems to be the essential function of trans-translation. The polypeptide is SsrA-binding protein (Xylella fastidiosa (strain M12)).